The following is a 414-amino-acid chain: Secernin-1 (414 aa).

It belongs to the peptidase C69 family. Secernin subfamily.

It localises to the cytoplasm. Functionally, regulates exocytosis in mast cells. Increases both the extent of secretion and the sensitivity of mast cells to stimulation with calcium. This chain is Secernin-1 (Scrn1), found in Mus musculus (Mouse).